Reading from the N-terminus, the 615-residue chain is ATP-dependent zinc metalloprotease FtsH (615 aa).

Topologically, residues 1-8 (MAMNKDKP) are cytoplasmic. The helical transmembrane segment at 9-29 (WTLYLLAVGLAVLAAVQFGLF) threads the bilayer. Residues 30–104 (SQPAVQAIPY…FSGVVEDNTV (75 aa)) lie on the Periplasmic side of the membrane. A helical transmembrane segment spans residues 105–125 (ATVMGALMPLLMLLALWYFLF). Residues 126–615 (HGLGQKQGLG…ATYVLVDATK (490 aa)) are Cytoplasmic-facing. 198-205 (GPPGTGKT) lines the ATP pocket. Histidine 420 serves as a coordination point for Zn(2+). Glutamate 421 is a catalytic residue. 2 residues coordinate Zn(2+): histidine 424 and aspartate 497.

This sequence in the central section; belongs to the AAA ATPase family. In the C-terminal section; belongs to the peptidase M41 family. Homohexamer. The cofactor is Zn(2+).

Its subcellular location is the cell inner membrane. Functionally, acts as a processive, ATP-dependent zinc metallopeptidase for both cytoplasmic and membrane proteins. Plays a role in the quality control of integral membrane proteins. The protein is ATP-dependent zinc metalloprotease FtsH of Pseudomonas putida (strain ATCC 700007 / DSM 6899 / JCM 31910 / BCRC 17059 / LMG 24140 / F1).